We begin with the raw amino-acid sequence, 261 residues long: Cytochrome c oxidase subunit 3 (261 aa).

The Mitochondrial matrix segment spans residues 2-15 (THQTHAYHMVNPSP). Residues 16-34 (WPLTGALSALLLTSGLVMW) traverse the membrane as a helical segment. The Mitochondrial intermembrane portion of the chain corresponds to 35–40 (FHYNST). Residues 41 to 66 (ILLSLGLLTNILTMYQWWRDIIREGT) traverse the membrane as a helical segment. Over 67–72 (YQGHHT) the chain is Mitochondrial matrix. Residues 73–105 (PIVQKGLRYGMILFIVSEVFFFAGFFWAFYHSS) form a helical membrane-spanning segment. Topologically, residues 106–128 (LVPTHDLGGCWPPTGITPLNPLE) are mitochondrial intermembrane. The helical transmembrane segment at 129-152 (VPLLNTSVLLASGVSITWAHHSLM) threads the bilayer. At 153 to 155 (EGN) the chain is on the mitochondrial matrix side. Residues 156-183 (RNHMNQALLITILLGLYFTILQASEYFE) form a helical membrane-spanning segment. Over 184 to 190 (TSFSISD) the chain is Mitochondrial intermembrane. The helical transmembrane segment at 191–223 (GIYGSTFFMATGFHGLHVIIGSTFLIVCLLRQL) threads the bilayer. Over 224–232 (KFHFTSKHH) the chain is Mitochondrial matrix. A helical transmembrane segment spans residues 233–256 (FGFEAAAWYWHFVDVVWLFLYVSI). The Mitochondrial intermembrane portion of the chain corresponds to 257 to 261 (YWWGS).

This sequence belongs to the cytochrome c oxidase subunit 3 family. In terms of assembly, component of the cytochrome c oxidase (complex IV, CIV), a multisubunit enzyme composed of 14 subunits. The complex is composed of a catalytic core of 3 subunits MT-CO1, MT-CO2 and MT-CO3, encoded in the mitochondrial DNA, and 11 supernumerary subunits COX4I, COX5A, COX5B, COX6A, COX6B, COX6C, COX7A, COX7B, COX7C, COX8 and NDUFA4, which are encoded in the nuclear genome. The complex exists as a monomer or a dimer and forms supercomplexes (SCs) in the inner mitochondrial membrane with NADH-ubiquinone oxidoreductase (complex I, CI) and ubiquinol-cytochrome c oxidoreductase (cytochrome b-c1 complex, complex III, CIII), resulting in different assemblies (supercomplex SCI(1)III(2)IV(1) and megacomplex MCI(2)III(2)IV(2)).

Its subcellular location is the mitochondrion inner membrane. It carries out the reaction 4 Fe(II)-[cytochrome c] + O2 + 8 H(+)(in) = 4 Fe(III)-[cytochrome c] + 2 H2O + 4 H(+)(out). Functionally, component of the cytochrome c oxidase, the last enzyme in the mitochondrial electron transport chain which drives oxidative phosphorylation. The respiratory chain contains 3 multisubunit complexes succinate dehydrogenase (complex II, CII), ubiquinol-cytochrome c oxidoreductase (cytochrome b-c1 complex, complex III, CIII) and cytochrome c oxidase (complex IV, CIV), that cooperate to transfer electrons derived from NADH and succinate to molecular oxygen, creating an electrochemical gradient over the inner membrane that drives transmembrane transport and the ATP synthase. Cytochrome c oxidase is the component of the respiratory chain that catalyzes the reduction of oxygen to water. Electrons originating from reduced cytochrome c in the intermembrane space (IMS) are transferred via the dinuclear copper A center (CU(A)) of subunit 2 and heme A of subunit 1 to the active site in subunit 1, a binuclear center (BNC) formed by heme A3 and copper B (CU(B)). The BNC reduces molecular oxygen to 2 water molecules using 4 electrons from cytochrome c in the IMS and 4 protons from the mitochondrial matrix. In Rattus norvegicus (Rat), this protein is Cytochrome c oxidase subunit 3.